Here is a 454-residue protein sequence, read N- to C-terminus: Transmembrane protein adipocyte-associated 1 homolog (454 aa).

Asn-26 and Asn-44 each carry an N-linked (GlcNAc...) asparagine glycan. The next 5 membrane-spanning stretches (helical) occupy residues 80 to 100, 113 to 133, 151 to 171, 180 to 200, and 224 to 244; these read AILIPNLLFLLFLFLKCTSVI, AFTLLVYVSTLVNIIRCVYSM, IIIKFFYLTAEFCALTFGLLF, ILIALLGTLLVSIPHTAVQVI, and FVFWVLSSATLALVYFFIMCL. Asn-258 is a glycosylation site (N-linked (GlcNAc...) asparagine). The next 2 membrane-spanning stretches (helical) occupy residues 262 to 282 and 290 to 310; these read FIYCMMMVTLNILQSMGAALI and LCFVGVSTYVYFVLYPPIIYF. 2 N-linked (GlcNAc...) asparagine glycosylation sites follow: Asn-322 and Asn-323. The interval 408 to 454 is disordered; the sequence is RTGSDDFAHHRDSMLSEPSTGTTTRHLKGLGPQGSLVFEEDPSSLRL. Residues 410–421 are compositionally biased toward basic and acidic residues; that stretch reads GSDDFAHHRDSM. Over residues 445–454 the composition is skewed to acidic residues; it reads FEEDPSSLRL.

Belongs to the UPF0359 family.

It is found in the membrane. This Caenorhabditis briggsae protein is Transmembrane protein adipocyte-associated 1 homolog (tpra-1).